A 160-amino-acid chain; its full sequence is Large ribosomal subunit protein uL22c (160 aa).

It belongs to the universal ribosomal protein uL22 family. Part of the 50S ribosomal subunit.

The protein resides in the plastid. It localises to the chloroplast. This protein binds specifically to 23S rRNA. Its function is as follows. The globular domain of the protein is located near the polypeptide exit tunnel on the outside of the subunit, while an extended beta-hairpin is found that lines the wall of the exit tunnel in the center of the 70S ribosome. The polypeptide is Large ribosomal subunit protein uL22c (rpl22) (Eucalyptus globulus subsp. globulus (Tasmanian blue gum)).